The following is a 217-amino-acid chain: Ribosomal RNA small subunit methyltransferase G (217 aa).

S-adenosyl-L-methionine is bound by residues glycine 79, leucine 84, 102–104 (DST), 130–131 (VE), and arginine 144.

This sequence belongs to the methyltransferase superfamily. RNA methyltransferase RsmG family.

The protein localises to the cytoplasm. Functionally, specifically methylates the N7 position of a guanine in 16S rRNA. This Chlorobaculum tepidum (strain ATCC 49652 / DSM 12025 / NBRC 103806 / TLS) (Chlorobium tepidum) protein is Ribosomal RNA small subunit methyltransferase G.